The following is a 293-amino-acid chain: Ribosomal protein L11 methyltransferase (293 aa).

S-adenosyl-L-methionine is bound by residues Thr145, Gly166, Asp188, and Asn230.

This sequence belongs to the methyltransferase superfamily. PrmA family.

The protein resides in the cytoplasm. The catalysed reaction is L-lysyl-[protein] + 3 S-adenosyl-L-methionine = N(6),N(6),N(6)-trimethyl-L-lysyl-[protein] + 3 S-adenosyl-L-homocysteine + 3 H(+). Its function is as follows. Methylates ribosomal protein L11. This is Ribosomal protein L11 methyltransferase from Sodalis glossinidius (strain morsitans).